An 87-amino-acid polypeptide reads, in one-letter code: Small ribosomal subunit protein bS20 (87 aa).

The protein belongs to the bacterial ribosomal protein bS20 family.

Its function is as follows. Binds directly to 16S ribosomal RNA. This is Small ribosomal subunit protein bS20 from Sphingopyxis alaskensis (strain DSM 13593 / LMG 18877 / RB2256) (Sphingomonas alaskensis).